Here is a 193-residue protein sequence, read N- to C-terminus: dTTP/UTP pyrophosphatase (193 aa).

Residue Asp75 is the Proton acceptor of the active site.

This sequence belongs to the Maf family. YhdE subfamily. The cofactor is a divalent metal cation.

It is found in the cytoplasm. The enzyme catalyses dTTP + H2O = dTMP + diphosphate + H(+). The catalysed reaction is UTP + H2O = UMP + diphosphate + H(+). Its function is as follows. Nucleoside triphosphate pyrophosphatase that hydrolyzes dTTP and UTP. May have a dual role in cell division arrest and in preventing the incorporation of modified nucleotides into cellular nucleic acids. The sequence is that of dTTP/UTP pyrophosphatase from Chlorobium luteolum (strain DSM 273 / BCRC 81028 / 2530) (Pelodictyon luteolum).